A 432-amino-acid chain; its full sequence is Interleukin-11 receptor subunit alpha-1 (432 aa).

The signal sequence occupies residues methionine 1–serine 23. At serine 24–alanine 372 the chain is on the extracellular side. The Ig-like C2-type domain maps to proline 27–glycine 110. 3 cysteine pairs are disulfide-bonded: cysteine 48-cysteine 94, cysteine 120-cysteine 130, and cysteine 170-cysteine 180. Fibronectin type-III domains are found at residues proline 112 to aspartate 219 and proline 220 to threonine 317. Asparagine 127 carries an N-linked (GlcNAc...) asparagine glycan. The segment at lysine 151–cysteine 170 is disordered. N-linked (GlcNAc...) asparagine glycosylation is present at asparagine 194. Positions tryptophan 304 to serine 308 match the WSXWS motif motif. Disordered regions lie at residues proline 309–glycine 332 and glutamate 342–histidine 361. A helical membrane pass occupies residues serine 373–leucine 393. At arginine 394–serine 432 the chain is on the cytoplasmic side.

This sequence belongs to the type I cytokine receptor family. Type 3 subfamily. As to quaternary structure, on IL11 binding, forms a multimer complex with IL6ST/gp130. A short soluble form is also released from the membrane by proteolysis. The sIL11RA is formed either by limited proteolysis of membrane-bound receptors, a process referred to as ectodomain shedding, or directly secreted from the cells after alternative mRNA splicing. mIL11RA is cleaved by the proteases ADAM10, ELANE and PRTN3. In terms of tissue distribution, widely expressed in all adult tissues and in embryos. Highest levels in kidney, skeletal muscle and embryo.

The protein localises to the membrane. It localises to the secreted. In terms of biological role, receptor for interleukin-11. The receptor systems for IL6, LIF, OSM, CNTF, IL11 and CT1 can utilize IL6ST for initiating signal transmission. The IL11/IL11RA/IL6ST complex may be involved in the control of proliferation and/or differentiation of skeletogenic progenitor or other mesenchymal cells. Essential for the normal development of craniofacial bones and teeth. Its function is as follows. Soluble form of IL11 receptor (sIL11RA) that acts as an agonist of IL11 activity. The IL11:sIL11RA complex binds to IL6ST/gp130 on cell surfaces and induces signaling also on cells that do not express membrane-bound IL11RA in a process called IL11 trans-signaling. The polypeptide is Interleukin-11 receptor subunit alpha-1 (Mus musculus (Mouse)).